The primary structure comprises 140 residues: Ubiquitin-like protein ATG12 (140 aa).

The tract at residues 1–52 is disordered; that stretch reads MAEEPQTVLQLPPSSAAGGEGLTDVSPETTTPEPPSSAAVSPGTEEPAGDTK. Positions 25-42 are enriched in low complexity; that stretch reads VSPETTTPEPPSSAAVSP. G140 participates in a covalent cross-link: Glycyl lysine isopeptide (Gly-Lys) (interchain with K-? in acceptor protein).

The protein belongs to the ATG12 family. As to quaternary structure, forms a conjugate with ATG5. Part of the minor complex composed of 4 sets of ATG12-ATG5 and ATG16L1 (400 kDa); this complex interacts with ATG3 leading to disruption of ATG7 interaction and promotion of ATG8-like proteins lipidation. Forms an 800-kDa complex composed of ATG12-ATG5 and ATG16L2. Interacts with DHX58/RIG-1, IFIH1/MDA5 and MAVS/IPS-1 in monomeric form as well as in ATG12-ATG5 conjugate. The interaction with MAVS is further enhanced upon vesicular stomatitis virus (VSV) infection. Interacts with ATG3; this interaction is essential for phosphatidylethanolamine (PE)-conjugated ATG8-like proteins formation. Interacts with ATG7. Interacts with ATG10. Interacts with TECPR1. Interacts with SH3BGRL. The ATG12-ATG5 conjugate interacts with PDCD6IP (via the BRO1 domain); this interaction is bridged by ATG12 and promotes multiple PDCD6IP-mediated functions such as endolysosomal trafficking, macroautophagy and exosome biogenesis. In terms of processing, acetylated by EP300.

It localises to the cytoplasm. Its subcellular location is the preautophagosomal structure membrane. Functionally, ubiquitin-like protein involved in autophagy vesicles formation. Conjugation with ATG5 through a ubiquitin-like conjugating system involving also ATG7 as an E1-like activating enzyme and ATG10 as an E2-like conjugating enzyme, is essential for its function. The ATG12-ATG5 conjugate acts as an E3-like enzyme which is required for lipidation of ATG8 family proteins and their association to the vesicle membranes. The ATG12-ATG5 conjugate also negatively regulates the innate antiviral immune response by blocking the type I IFN production pathway through direct association with RARRES3 and MAVS. Also plays a role in translation or delivery of incoming viral RNA to the translation apparatus. As part of the ATG8 conjugation system with ATG5 and ATG16L1, required for recruitment of LRRK2 to stressed lysosomes and induction of LRRK2 kinase activity in response to lysosomal stress. This Pongo abelii (Sumatran orangutan) protein is Ubiquitin-like protein ATG12.